An 81-amino-acid chain; its full sequence is Putative membrane protein insertion efficiency factor (81 aa).

This sequence belongs to the UPF0161 family.

Its subcellular location is the cell inner membrane. Functionally, could be involved in insertion of integral membrane proteins into the membrane. This Legionella pneumophila (strain Lens) protein is Putative membrane protein insertion efficiency factor.